The sequence spans 300 residues: 4-diphosphocytidyl-2-C-methyl-D-erythritol kinase (300 aa).

Lysine 17 is a catalytic residue. Position 102 to 112 (102 to 112) interacts with ATP; that stretch reads PVAAGIGGGSA. The active site involves aspartate 144.

It belongs to the GHMP kinase family. IspE subfamily.

The catalysed reaction is 4-CDP-2-C-methyl-D-erythritol + ATP = 4-CDP-2-C-methyl-D-erythritol 2-phosphate + ADP + H(+). The protein operates within isoprenoid biosynthesis; isopentenyl diphosphate biosynthesis via DXP pathway; isopentenyl diphosphate from 1-deoxy-D-xylulose 5-phosphate: step 3/6. Functionally, catalyzes the phosphorylation of the position 2 hydroxy group of 4-diphosphocytidyl-2C-methyl-D-erythritol. This is 4-diphosphocytidyl-2-C-methyl-D-erythritol kinase from Bradyrhizobium sp. (strain ORS 278).